The sequence spans 174 residues: ATP synthase subunit b 2 (174 aa).

Residues 27–47 (IFWLIITLVAIYLILTKVALP) traverse the membrane as a helical segment.

The protein belongs to the ATPase B chain family. In terms of assembly, F-type ATPases have 2 components, F(1) - the catalytic core - and F(0) - the membrane proton channel. F(1) has five subunits: alpha(3), beta(3), gamma(1), delta(1), epsilon(1). F(0) has three main subunits: a(1), b(2) and c(10-14). The alpha and beta chains form an alternating ring which encloses part of the gamma chain. F(1) is attached to F(0) by a central stalk formed by the gamma and epsilon chains, while a peripheral stalk is formed by the delta and b chains.

The protein resides in the cell inner membrane. F(1)F(0) ATP synthase produces ATP from ADP in the presence of a proton or sodium gradient. F-type ATPases consist of two structural domains, F(1) containing the extramembraneous catalytic core and F(0) containing the membrane proton channel, linked together by a central stalk and a peripheral stalk. During catalysis, ATP synthesis in the catalytic domain of F(1) is coupled via a rotary mechanism of the central stalk subunits to proton translocation. Its function is as follows. Component of the F(0) channel, it forms part of the peripheral stalk, linking F(1) to F(0). The b'-subunit is a diverged and duplicated form of b found in plants and photosynthetic bacteria. This is ATP synthase subunit b 2 (atpF2) from Dinoroseobacter shibae (strain DSM 16493 / NCIMB 14021 / DFL 12).